A 181-amino-acid chain; its full sequence is UPF0397 protein STER_0346 (181 aa).

Transmembrane regions (helical) follow at residues 11 to 31 (ATGI…IPIF), 45 to 65 (LFSV…GHAL), 72 to 92 (GNIS…IGLF), 109 to 129 (IWFN…VTPI), and 147 to 167 (FVAG…LLAI).

The protein belongs to the UPF0397 family.

It is found in the cell membrane. This Streptococcus thermophilus (strain ATCC BAA-491 / LMD-9) protein is UPF0397 protein STER_0346.